Reading from the N-terminus, the 856-residue chain is Serine/threonine-protein phosphatase 6 regulatory subunit 1 (856 aa).

Positions 10 to 403 are interaction with PPP6C; sequence SSHLDTLLEK…VFNNFLHAQV (394 aa). At S232 the chain carries Phosphoserine. T524 is modified (phosphothreonine). Residues S529, S530, and S531 each carry the phosphoserine modification. Positions 621–630 are enriched in acidic residues; the sequence is DDEEEEEEEG. Disordered stretches follow at residues 621 to 770 and 792 to 856; these read DDEE…KVAE and RSAP…SGSQ. Phosphoserine is present on residues S633 and S636. Residues 644–656 show a composition bias toward polar residues; the sequence is QGSQPVRASQASQ. The span at 667–683 shows a compositional bias: acidic residues; the sequence is DSEEEDEEEDEEEDEGA. Phosphoserine is present on residues S698 and S739. The span at 794 to 809 shows a compositional bias: polar residues; it reads APSSLDSATRDPSTSV. Position 826 is a phosphoserine (S826). The span at 842–856 shows a compositional bias: low complexity; that stretch reads PNGSTPGGPISSGSQ.

The protein belongs to the SAPS family. Protein phosphatase 6 (PP6) holoenzyme is proposed to be a heterotrimeric complex formed of the catalytic subunit, a SAPS domain-containing subunit (PP6R) and an ankyrin repeat-domain containing regulatory subunit (ARS). Interacts with PPP6C and NFKBIE. Interacts with ANKRD28, ANKRD44 and ANKRD52. Ubiquitous with highest expression in lung, spleen and bladder.

The protein resides in the cytoplasm. Regulatory subunit of protein phosphatase 6 (PP6). May function as a scaffolding PP6 subunit. Involved in the PP6-mediated dephosphorylation of NFKBIE opposing its degradation in response to TNF-alpha. The sequence is that of Serine/threonine-protein phosphatase 6 regulatory subunit 1 (Ppp6r1) from Mus musculus (Mouse).